The following is a 248-amino-acid chain: Triosephosphate isomerase (248 aa).

A substrate-binding site is contributed by 9–11 (NWK). Histidine 92 serves as the catalytic Electrophile. The active-site Proton acceptor is the glutamate 164. Residues glycine 170, serine 210, and 231-232 (GG) contribute to the substrate site.

It belongs to the triosephosphate isomerase family. As to quaternary structure, homodimer.

The protein localises to the cytoplasm. The catalysed reaction is D-glyceraldehyde 3-phosphate = dihydroxyacetone phosphate. Its pathway is carbohydrate biosynthesis; gluconeogenesis. It participates in carbohydrate degradation; glycolysis; D-glyceraldehyde 3-phosphate from glycerone phosphate: step 1/1. Functionally, involved in the gluconeogenesis. Catalyzes stereospecifically the conversion of dihydroxyacetone phosphate (DHAP) to D-glyceraldehyde-3-phosphate (G3P). This Mycoplasma capricolum subsp. capricolum (strain California kid / ATCC 27343 / NCTC 10154) protein is Triosephosphate isomerase.